The primary structure comprises 269 residues: uncharacterized protein (269 aa).

Over residues 181–191 (QKKELSPHEIA) the composition is skewed to basic and acidic residues. The segment at 181–203 (QKKELSPHEIAESPSSHSTSPMG) is disordered. The segment covering 193-202 (SPSSHSTSPM) has biased composition (polar residues). Position 200 is a phosphoserine (S200).

This is an uncharacterized protein from Schizosaccharomyces pombe (strain 972 / ATCC 24843) (Fission yeast).